Consider the following 566-residue polypeptide: Membrane protein insertase YidC (566 aa).

5 consecutive transmembrane segments (helical) span residues 3-23 (IKRI…FNAW), 346-366 (GWLW…HAVV), 369-389 (WGWS…WFSA), 436-456 (GGCL…YVII), and 509-529 (MWIL…GLVL).

Belongs to the OXA1/ALB3/YidC family. Type 1 subfamily. In terms of assembly, interacts with the Sec translocase complex via SecD. Specifically interacts with transmembrane segments of nascent integral membrane proteins during membrane integration.

It is found in the cell inner membrane. Functionally, required for the insertion and/or proper folding and/or complex formation of integral membrane proteins into the membrane. Involved in integration of membrane proteins that insert both dependently and independently of the Sec translocase complex, as well as at least some lipoproteins. Aids folding of multispanning membrane proteins. The protein is Membrane protein insertase YidC of Coxiella burnetii (strain Dugway 5J108-111).